The chain runs to 1474 residues: Alpha-2-macroglobulin-P (1474 aa).

The signal sequence occupies residues 1 to 32; the sequence is MGKRWLPSLALLPLPPPLLLLLLLLLPTNASA. Cys55 and Cys93 are joined by a disulfide. Asn62, Asn77, and Asn253 each carry an N-linked (GlcNAc...) asparagine glycan. Cystine bridges form between Cys257-Cys305 and Cys275-Cys293. Residue Asn402 is glycosylated (N-linked (GlcNAc...) asparagine). Disulfide bonds link Cys476-Cys569, Cys601-Cys771, and Cys650-Cys697. Positions 623–752 are bait region; that stretch reads LVYDLLPVKD…LVIVDSTGVA (130 aa). Asn654 and Asn774 each carry an N-linked (GlcNAc...) asparagine glycan. Cystine bridges form between Cys821-Cys849, Cys847-Cys883, Cys921-Cys1321, Cys1079-Cys1127, and Cys1352-Cys1467. Residue Asn869 is glycosylated (N-linked (GlcNAc...) asparagine). A cross-link (isoglutamyl cysteine thioester (Cys-Gln)) is located at residues 972-975; sequence CGEQ. N-linked (GlcNAc...) asparagine glycosylation occurs at Asn991. An N-linked (GlcNAc...) asparagine glycan is attached at Asn1366.

Belongs to the protease inhibitor I39 (alpha-2-macroglobulin) family. In terms of assembly, homotetramer; disulfide-linked. Expressed in uterus, mesometrial lymphoid aggregate and mammary tissue during pregnancy. Expressed in ovary, testis and kidney. Low level expression in heart. Not expressed in liver.

Its subcellular location is the secreted. Functionally, is able to inhibit all four classes of proteinases by a unique 'trapping' mechanism. This protein has a peptide stretch, called the 'bait region' which contains specific cleavage sites for different proteinases. When a proteinase cleaves the bait region, a conformational change is induced in the protein which traps the proteinase. The entrapped enzyme remains active against low molecular weight substrates (activity against high molecular weight substrates is greatly reduced). Following cleavage in the bait region a thioester bond is hydrolyzed and mediates the covalent binding of the protein to the proteinase. This chain is Alpha-2-macroglobulin-P, found in Mus musculus (Mouse).